We begin with the raw amino-acid sequence, 523 residues long: 2-isopropylmalate synthase (523 aa).

Positions 5–267 (VIIFDTTLRD…HTNINHHEIW (263 aa)) constitute a Pyruvate carboxyltransferase domain. 4 residues coordinate Mn(2+): aspartate 14, histidine 202, histidine 204, and asparagine 238. Positions 392–523 (RLDYFSVQSG…HNKENNKEIV (132 aa)) are regulatory domain.

This sequence belongs to the alpha-IPM synthase/homocitrate synthase family. LeuA type 1 subfamily. In terms of assembly, homodimer. Mn(2+) serves as cofactor.

Its subcellular location is the cytoplasm. The catalysed reaction is 3-methyl-2-oxobutanoate + acetyl-CoA + H2O = (2S)-2-isopropylmalate + CoA + H(+). It functions in the pathway amino-acid biosynthesis; L-leucine biosynthesis; L-leucine from 3-methyl-2-oxobutanoate: step 1/4. Functionally, catalyzes the condensation of the acetyl group of acetyl-CoA with 3-methyl-2-oxobutanoate (2-ketoisovalerate) to form 3-carboxy-3-hydroxy-4-methylpentanoate (2-isopropylmalate). In Salmonella arizonae (strain ATCC BAA-731 / CDC346-86 / RSK2980), this protein is 2-isopropylmalate synthase.